A 961-amino-acid polypeptide reads, in one-letter code: Leucine--tRNA ligase (961 aa).

The short motif at 41–51 (PYLNGNLHAGH) is the 'HIGH' region element. The 'KMSKS' region motif lies at 632 to 636 (KMSKS). Lys-635 provides a ligand contact to ATP.

This sequence belongs to the class-I aminoacyl-tRNA synthetase family.

It localises to the cytoplasm. The catalysed reaction is tRNA(Leu) + L-leucine + ATP = L-leucyl-tRNA(Leu) + AMP + diphosphate. This chain is Leucine--tRNA ligase, found in Methanosarcina acetivorans (strain ATCC 35395 / DSM 2834 / JCM 12185 / C2A).